Reading from the N-terminus, the 466-residue chain is Phosphomethylpyrimidine synthase (466 aa).

Residues Asn-80, Met-109, Tyr-139, His-175, Ser-195–Gly-197, Asp-236–Arg-239, and Glu-275 each bind substrate. Residue His-279 participates in Zn(2+) binding. Residue Tyr-302 participates in substrate binding. His-343 is a Zn(2+) binding site. The [4Fe-4S] cluster site is built by Cys-423, Cys-426, and Cys-431.

Belongs to the ThiC family. [4Fe-4S] cluster is required as a cofactor.

The enzyme catalyses 5-amino-1-(5-phospho-beta-D-ribosyl)imidazole + S-adenosyl-L-methionine = 4-amino-2-methyl-5-(phosphooxymethyl)pyrimidine + CO + 5'-deoxyadenosine + formate + L-methionine + 3 H(+). Its pathway is cofactor biosynthesis; thiamine diphosphate biosynthesis. Catalyzes the synthesis of the hydroxymethylpyrimidine phosphate (HMP-P) moiety of thiamine from aminoimidazole ribotide (AIR) in a radical S-adenosyl-L-methionine (SAM)-dependent reaction. The sequence is that of Phosphomethylpyrimidine synthase from Prochlorococcus marinus (strain NATL1A).